Consider the following 190-residue polypeptide: Threonylcarbamoyl-AMP synthase (190 aa).

The region spanning Arg7–Gly190 is the YrdC-like domain.

The protein belongs to the SUA5 family. TsaC subfamily.

Its subcellular location is the cytoplasm. The catalysed reaction is L-threonine + hydrogencarbonate + ATP = L-threonylcarbamoyladenylate + diphosphate + H2O. Required for the formation of a threonylcarbamoyl group on adenosine at position 37 (t(6)A37) in tRNAs that read codons beginning with adenine. Catalyzes the conversion of L-threonine, HCO(3)(-)/CO(2) and ATP to give threonylcarbamoyl-AMP (TC-AMP) as the acyladenylate intermediate, with the release of diphosphate. The sequence is that of Threonylcarbamoyl-AMP synthase from Escherichia coli O9:H4 (strain HS).